Here is a 778-residue protein sequence, read N- to C-terminus: Subtilisin-like protease SBT3.6 (778 aa).

The first 22 residues, 1–22 (MMNYRTSIYVVLSLVIFLNVQR), serve as a signal peptide directing secretion. A propeptide spans 23–113 (SFVAESSAKR…VIPDSFYKLA (91 aa)) (activation peptide). The region spanning 34–113 (VHIVYLGEKQ…VIPDSFYKLA (80 aa)) is the Inhibitor I9 domain. An N-linked (GlcNAc...) asparagine glycan is attached at asparagine 69. The 509-residue stretch at 117–625 (TWDYLGLSAA…GGLVNPEKSA (509 aa)) folds into the Peptidase S8 domain. Residue aspartate 147 is the Charge relay system of the active site. N-linked (GlcNAc...) asparagine glycosylation is found at asparagine 158, asparagine 180, asparagine 202, and asparagine 206. Histidine 222 functions as the Charge relay system in the catalytic mechanism. N-linked (GlcNAc...) asparagine glycosylation is found at asparagine 237, asparagine 399, asparagine 414, and asparagine 541. Positions 388–483 (SLVYPENPGN…ELGTDILLYT (96 aa)) constitute a PA domain. The active-site Charge relay system is serine 556. 3 N-linked (GlcNAc...) asparagine glycosylation sites follow: asparagine 648, asparagine 724, and asparagine 759.

It belongs to the peptidase S8 family.

It is found in the secreted. This chain is Subtilisin-like protease SBT3.6, found in Arabidopsis thaliana (Mouse-ear cress).